Consider the following 257-residue polypeptide: Phosphonates import ATP-binding protein PhnC (257 aa).

The 245-residue stretch at 2–246 (IEFRNVSKVY…KFAEIYGDVA (245 aa)) folds into the ABC transporter domain. 35–42 (GLSGAGKS) contacts ATP.

The protein belongs to the ABC transporter superfamily. Phosphonates importer (TC 3.A.1.9.1) family. As to quaternary structure, the complex is composed of two ATP-binding proteins (PhnC), two transmembrane proteins (PhnE) and a solute-binding protein (PhnD).

The protein resides in the cell membrane. The enzyme catalyses phosphonate(out) + ATP + H2O = phosphonate(in) + ADP + phosphate + H(+). In terms of biological role, part of the ABC transporter complex PhnCDE involved in phosphonates import. Responsible for energy coupling to the transport system. The chain is Phosphonates import ATP-binding protein PhnC from Bacillus cereus (strain ZK / E33L).